We begin with the raw amino-acid sequence, 554 residues long: MPTINVNKVDLERLCNLVLSDKLIEDKFPMMGVEVEEIFEEIDKSGKKQKIIQFSINPDRPDYLSVEGLARGFRGFMGINTGFQQFDVYESDTNVTVLDNESRPYIAFALVKNVQMDEMVLESIINLQEKLHWALGRDRKKLAIGVHDFDMVKGPFTYKEIKGDEIKFAPLGYDSEEMTPKEILEKHEKGQKYGKLIKDGKFPIIVDSKNNVLSMPPIINGTLTKVTKNSKNLLIDITGTEKEAVEEALNIFVCSLFERSGTIYSVNVNGKRYPDLTPRYREISIDLINKKLGLELNAGEIISALKKARMDVKFENEKLMVKIPAYRNDILHNVDLKEEVAKNHGYEKFEGKLPSIATTGSRNPIEKKCKHYQNTMLGFGFFEVMNLTLSNQETLFEKMNLKYSEKDYVEVLKPASIEHRVLRTSILPMLLETLFINKHNVLPQKIFEIGDCVLIDENDTKTDTKCKNIKKISCAVVHPLTNFNEIKTVTEGLLRETFGEFEIENYEHPSFISGRCAKILNNGKEIGFFGEIHPEVILNFELEHPIVAFEILIE.

The 76-residue stretch at Leu276 to Gly351 folds into the B5 domain. Mg(2+) contacts are provided by Asp329, Asp335, Glu338, and Glu339.

It belongs to the phenylalanyl-tRNA synthetase beta subunit family. Type 2 subfamily. In terms of assembly, tetramer of two alpha and two beta subunits. The cofactor is Mg(2+).

It is found in the cytoplasm. The catalysed reaction is tRNA(Phe) + L-phenylalanine + ATP = L-phenylalanyl-tRNA(Phe) + AMP + diphosphate + H(+). The sequence is that of Phenylalanine--tRNA ligase beta subunit from Methanococcus vannielii (strain ATCC 35089 / DSM 1224 / JCM 13029 / OCM 148 / SB).